The chain runs to 136 residues: MTERTLILIKPDGVERGLIGEIIARIERKGLKISALDLRVADRETAEKHYAEHADKPFFGELVNFITSAPLIAGVVEGPRAIEAWRQLAGGTDPVAKATPGTIRGDFALEVSTNVVHGSDSPESAEREISIWFPNL.

ATP-binding residues include Lys10, Phe58, Arg86, Thr92, Arg104, and Asn114. His117 (pros-phosphohistidine intermediate) is an active-site residue.

It belongs to the NDK family. As to quaternary structure, homotetramer. Requires Mg(2+) as cofactor.

It is found in the cytoplasm. It carries out the reaction a 2'-deoxyribonucleoside 5'-diphosphate + ATP = a 2'-deoxyribonucleoside 5'-triphosphate + ADP. It catalyses the reaction a ribonucleoside 5'-diphosphate + ATP = a ribonucleoside 5'-triphosphate + ADP. Its function is as follows. Major role in the synthesis of nucleoside triphosphates other than ATP. The ATP gamma phosphate is transferred to the NDP beta phosphate via a ping-pong mechanism, using a phosphorylated active-site intermediate. This Corynebacterium diphtheriae (strain ATCC 700971 / NCTC 13129 / Biotype gravis) protein is Nucleoside diphosphate kinase.